A 535-amino-acid polypeptide reads, in one-letter code: T-complex protein 1 subunit epsilon (535 aa).

The protein belongs to the TCP-1 chaperonin family. As to quaternary structure, heterooligomeric complex of about 850 to 900 kDa that forms two stacked rings, 12 to 16 nm in diameter.

Its subcellular location is the cytoplasm. Functionally, molecular chaperone; assists the folding of proteins upon ATP hydrolysis. Known to play a role, in vitro, in the folding of actin and tubulin. In Avena sativa (Oat), this protein is T-complex protein 1 subunit epsilon.